Here is a 997-residue protein sequence, read N- to C-terminus: Serine-repeat antigen protein 5 (997 aa).

A signal peptide spans 1–22 (MKSYISLFFILCVIFNKNVIKC). 2 disordered regions span residues 26–107 (SQTG…EKQD) and 181–252 (LPSN…PRNL). The segment covering 30 to 51 (NTGGGQAGNTGGDQAGSTGGSP) has biased composition (gly residues). Residues 52-67 (QGSTGASPQGSTGASP) show a composition bias toward low complexity. The segment covering 68 to 84 (QGSTGASQPGSSEPSNP) has biased composition (polar residues). 3 stretches are compositionally biased toward low complexity: residues 85–103 (VSSG…STSS), 183–196 (SNGT…STGT), and 205–235 (SDSS…SSES). S183 carries the phosphoserine modification. N184 carries an N-linked (GlcNAc...) asparagine glycan. The interval 216–253 (SSSSSSSSSSSSSSSSSSESLPANGPDSPTVKPPRNLQ) is interaction with PTKL. An N-linked (GlcNAc...) asparagine glycan is attached at N318. An interaction with host VTN region spans residues 373 to 390 (YKYLSEDIVSKFKEIKAE). Residues C445 and C497 are joined by a disulfide bond. A Phosphothreonine; by CPK1 modification is found at T549. 5 cysteine pairs are disulfide-bonded: C567/C572, C581/C610, C593/C636, C627/C672, and C755/C809. Residues 579–997 (NNCISNLQVE…TNNECYFCYV (419 aa)) form a thiol-protease-like region. Catalysis depends on residues H762 and N787. An N-linked (GlcNAc...) asparagine glycan is attached at N828. Residues 843-886 (KASPEFYHNLYFKNFNVGKKNLFSEKEDNENNKKLGNNYIIFGQ) constitute a propeptide, inhibition peptide. Residue S866 is modified to Phosphoserine.

This sequence belongs to the peptidase C1 family. May interact (via C-terminus) with PTKL (via SAM domain). As to quaternary structure, interacts (via C-terminus) with human VTN (via hemopexin repeat 2); may form heterotetramers of two VTN and SERA5 P47 heterodimers; the interaction may protect merozoites from phagocytosis by host monocytes; VTN glycosylation appears to be dispensable for the interaction. In terms of assembly, monomer. Interacts with kinase CPK1/CDPK1 at the schizont stage. In terms of processing, phosphorylation by CPK1/CDPK1 increases SERA5 protease activity towards a synthetic peptide in vitro. Just prior to merozoite egress from host erythrocytes, proteolytically cleaved into multiple fragments. Cleaved by SUB1 into p47 and p73, p73 is further cleaved by SUB1 into p56 and p18 and p56 is further processed into p50 by an unidentified protease. p47 remains covalently associated with p18 via disulfide bond. p47 can be processed into p25n and p25c by SUB1. p25c and p25n remain associated with p18. Proteolytic processing is essential for merozoite egress from host erythrocytes. The cleavage of the propeptide to produce p50 is necessary for protease activity and to promote merozoite egress.

It is found in the parasitophorous vacuole. It localises to the secreted. The protein resides in the cell membrane. Plays an essential role during the asexual blood stage development by controlling the kinetics of merozoite egress from host erythrocytes. Specifically, prevents premature rupture of the parasitophorous vacuole and host erythrocyte membranes. In terms of biological role, may prevent merozoite phagocytosis by host monocytes via interaction with host VTN at the merozoite surface. Plays a role in parasite growth. Its function is as follows. Protease activity is controversial. Has been shown in a number of studies to have protease activity towards a synthetic peptide in vitro. Has also been shown to lack protease activity towards a synthetic peptide in vitro. This Plasmodium falciparum (isolate 3D7) protein is Serine-repeat antigen protein 5.